Consider the following 82-residue polypeptide: Small ribosomal subunit protein uS17 (82 aa).

Belongs to the universal ribosomal protein uS17 family. In terms of assembly, part of the 30S ribosomal subunit.

Functionally, one of the primary rRNA binding proteins, it binds specifically to the 5'-end of 16S ribosomal RNA. In Rickettsia rickettsii (strain Iowa), this protein is Small ribosomal subunit protein uS17.